A 427-amino-acid chain; its full sequence is MRSYLRFSDRHRQRPTRPRKRVICSSAHFICSRMSPAATAQSPFGISLHSLSFRLLLIFRGSIVAMSRRFVYKLDQAVTAALGPNGRYIAMVGMTASAVLLTFHYKFREVIAATDNVAEIQSPSKLFYLRLLFGRTRSRITGSVMNINIMPALRDPIYRTLASVGGIDTEEIRYPLRSYKCIGHLFARTLKDKEREIEDIGTQSLASPADGVVTALGDVSSERVEQVKGATYSLRAFLGLMPKVTNPEKNTLKFVVLHLKPKNYHHFHAPAKFDVNVLRHMTGETLPVFSSFLKRFNDIFSVNERVVMSGNWKYGCMHMVAVAAYNVGNIRIDKEPSLRTNELRVVLRHLGGDVETRTYSRQPFEYSVGQHVGEFRLGSTIVLIFEAPHNFTWDMKPGQEVRVGQRLGGVGPIRRAQTEDERLFAFY.

The transit peptide at 1-77 (MRSYLRFSDR…RRFVYKLDQA (77 aa)) directs the protein to the mitochondrion. Residues 78-88 (VTAALGPNGRY) lie on the Mitochondrial matrix side of the membrane. A helical membrane pass occupies residues 89-107 (IAMVGMTASAVLLTFHYKF). At 108 to 427 (REVIAATDNV…TEDERLFAFY (320 aa)) the chain is on the mitochondrial intermembrane side. Catalysis depends on charge relay system; for autoendoproteolytic cleavage activity residues Asp210, His268, and Ser379. The Schiff-base intermediate with substrate; via pyruvic acid; for decarboxylase activity role is filled by Ser379. A Pyruvic acid (Ser); by autocatalysis modification is found at Ser379.

This sequence belongs to the phosphatidylserine decarboxylase family. PSD-B subfamily. Eukaryotic type I sub-subfamily. As to quaternary structure, heterodimer of a large membrane-associated beta subunit and a small pyruvoyl-containing alpha subunit. The cofactor is pyruvate. In terms of processing, is synthesized initially as an inactive proenzyme. Formation of the active enzyme involves a self-maturation process in which the active site pyruvoyl group is generated from an internal serine residue via an autocatalytic post-translational modification. Two non-identical subunits are generated from the proenzyme in this reaction, and the pyruvate is formed at the N-terminus of the alpha chain, which is derived from the carboxyl end of the proenzyme. The autoendoproteolytic cleavage occurs by a canonical serine protease mechanism, in which the side chain hydroxyl group of the serine supplies its oxygen atom to form the C-terminus of the beta chain, while the remainder of the serine residue undergoes an oxidative deamination to produce ammonia and the pyruvoyl prosthetic group on the alpha chain. During this reaction, the Ser that is part of the protease active site of the proenzyme becomes the pyruvoyl prosthetic group, which constitutes an essential element of the active site of the mature decarboxylase.

The protein localises to the mitochondrion. It is found in the mitochondrion inner membrane. It catalyses the reaction a 1,2-diacyl-sn-glycero-3-phospho-L-serine + H(+) = a 1,2-diacyl-sn-glycero-3-phosphoethanolamine + CO2. Its pathway is phospholipid metabolism; phosphatidylethanolamine biosynthesis; phosphatidylethanolamine from CDP-diacylglycerol: step 2/2. In terms of biological role, catalyzes the formation of phosphatidylethanolamine (PtdEtn) from phosphatidylserine (PtdSer). Plays a central role in phospholipid metabolism and in the interorganelle trafficking of phosphatidylserine. The protein is Phosphatidylserine decarboxylase proenzyme 1, mitochondrial of Toxoplasma gondii (strain ATCC 50853 / GT1).